Consider the following 131-residue polypeptide: Protein TAP2 (131 aa).

Positions 1–22 are cleaved as a signal peptide; sequence MAKSSPTYTVLFLLGLLALSTA. The segment at 75-101 is disordered; that stretch reads ARSGGETDVKKMEGSMPDQGKTAGRDQ.

In terms of tissue distribution, tapetum of anthers.

The polypeptide is Protein TAP2 (TAP2) (Antirrhinum majus (Garden snapdragon)).